Consider the following 38-residue polypeptide: Mu-hexatoxin-Mg1b (38 aa).

3 disulfide bridges follow: C1-C15, C8-C20, and C14-C34. A Serine amide modification is found at S38.

It belongs to the neurotoxin 14 (magi-1) family. 09 (magi-1) subfamily. Expressed by the venom gland.

It is found in the secreted. Functionally, insecticidal neurotoxin. Shows competition for site 3 of insect voltage-gated sodium channels (Nav). In Macrothele gigas (Japanese funnel web spider), this protein is Mu-hexatoxin-Mg1b.